A 189-amino-acid polypeptide reads, in one-letter code: UPF0251 protein MTH_1178 (189 aa).

Belongs to the UPF0251 family.

This Methanothermobacter thermautotrophicus (strain ATCC 29096 / DSM 1053 / JCM 10044 / NBRC 100330 / Delta H) (Methanobacterium thermoautotrophicum) protein is UPF0251 protein MTH_1178.